The sequence spans 241 residues: ATP synthase subunit a (241 aa).

5 consecutive transmembrane segments (helical) span residues Gly30–Gly50, Phe91–Trp111, Ile128–Ser148, Leu193–Leu213, and Gly214–Gly234.

This sequence belongs to the ATPase A chain family. F-type ATPases have 2 components, CF(1) - the catalytic core - and CF(0) - the membrane proton channel. CF(1) has five subunits: alpha(3), beta(3), gamma(1), delta(1), epsilon(1). CF(0) has four main subunits: a, b, b' and c.

The protein localises to the cellular thylakoid membrane. Key component of the proton channel; it plays a direct role in the translocation of protons across the membrane. The polypeptide is ATP synthase subunit a (Prochlorococcus marinus (strain NATL1A)).